The chain runs to 237 residues: Ribosomal RNA large subunit methyltransferase E (237 aa).

Residues Gly76, Trp78, Asp99, Asp115, and Asp139 each coordinate S-adenosyl-L-methionine. Residue Lys179 is the Proton acceptor of the active site.

It belongs to the class I-like SAM-binding methyltransferase superfamily. RNA methyltransferase RlmE family.

Its subcellular location is the cytoplasm. It catalyses the reaction uridine(2552) in 23S rRNA + S-adenosyl-L-methionine = 2'-O-methyluridine(2552) in 23S rRNA + S-adenosyl-L-homocysteine + H(+). Functionally, specifically methylates the uridine in position 2552 of 23S rRNA at the 2'-O position of the ribose in the fully assembled 50S ribosomal subunit. In Rhodopseudomonas palustris (strain TIE-1), this protein is Ribosomal RNA large subunit methyltransferase E.